The following is a 240-amino-acid chain: ATP-dependent dethiobiotin synthetase BioD (240 aa).

E15–F20 provides a ligand contact to ATP. T19 contacts Mg(2+). The active site involves K40. Residues D57, E118–G121, and N178–R179 contribute to the ATP site. The Mg(2+) site is built by D57 and E118.

Belongs to the dethiobiotin synthetase family. In terms of assembly, homodimer. Requires Mg(2+) as cofactor.

The protein resides in the cytoplasm. It carries out the reaction (7R,8S)-7,8-diammoniononanoate + CO2 + ATP = (4R,5S)-dethiobiotin + ADP + phosphate + 3 H(+). Its pathway is cofactor biosynthesis; biotin biosynthesis; biotin from 7,8-diaminononanoate: step 1/2. Functionally, catalyzes a mechanistically unusual reaction, the ATP-dependent insertion of CO2 between the N7 and N8 nitrogen atoms of 7,8-diaminopelargonic acid (DAPA, also called 7,8-diammoniononanoate) to form a ureido ring. The polypeptide is ATP-dependent dethiobiotin synthetase BioD (Burkholderia mallei (strain NCTC 10247)).